The chain runs to 517 residues: GMP synthase [glutamine-hydrolyzing] (517 aa).

Residues 9–199 (RILILDFGSQ…VLNVCGCEGL (191 aa)) form the Glutamine amidotransferase type-1 domain. The Nucleophile role is filled by Cys-86. Residues His-173 and Glu-175 contribute to the active site. The 193-residue stretch at 200 to 392 (WTSASIIEDA…LGLPYNMLYR (193 aa)) folds into the GMPS ATP-PPase domain. Residue 227–233 (SGGVDSS) coordinates ATP.

Homodimer.

The enzyme catalyses XMP + L-glutamine + ATP + H2O = GMP + L-glutamate + AMP + diphosphate + 2 H(+). The protein operates within purine metabolism; GMP biosynthesis; GMP from XMP (L-Gln route): step 1/1. Functionally, catalyzes the synthesis of GMP from XMP. This Aliivibrio fischeri (strain ATCC 700601 / ES114) (Vibrio fischeri) protein is GMP synthase [glutamine-hydrolyzing].